We begin with the raw amino-acid sequence, 274 residues long: Probable S-adenosylmethionine-dependent methyltransferase MT3114 (274 aa).

The tract at residues 1 to 24 (MCAFVPHVPRHSRGDNPPSASTAS) is disordered.

It belongs to the methyltransferase superfamily.

In terms of biological role, probable S-adenosylmethionine-dependent methyltransferase required for the 6-O-methylation of the polysaccharide backbone of 6-O-methylglucosyl lipopolysaccharides (MGLP). This is Probable S-adenosylmethionine-dependent methyltransferase MT3114 from Mycobacterium tuberculosis (strain CDC 1551 / Oshkosh).